The sequence spans 729 residues: Leucine-rich repeat flightless-interacting protein 1 (729 aa).

Position 2 is an N-acetylthreonine (Thr-2). Phosphoserine is present on Ser-16. The segment covering Ile-40–Ser-65 has biased composition (basic and acidic residues). Residues Ile-40–Glu-98 form a disordered region. A compositionally biased stretch (low complexity) spans Ser-78 to Ser-94. Ser-83, Ser-84, Ser-88, Asp-90, Ser-92, and Thr-97 each carry phosphoserine. Positions Ser-94–Lys-194 form a coiled coil. Residue Lys-249 forms a Glycyl lysine isopeptide (Lys-Gly) (interchain with G-Cter in SUMO1) linkage. Residues Val-253–Ser-729 are disordered. The span at Glu-260–Pro-272 shows a compositional bias: polar residues. A compositionally biased stretch (basic and acidic residues) spans Asp-277–Glu-297. Position 302 is a phosphoserine (Ser-302). The segment covering Gln-313 to Leu-326 has biased composition (polar residues). Basic and acidic residues predominate over residues Lys-327 to Ser-343. Over residues Arg-344–Cys-354 the composition is skewed to polar residues. 2 positions are modified to phosphoserine: Ser-346 and Ser-348. Basic and acidic residues-rich tracts occupy residues Lys-435–Leu-445 and Lys-482–Ile-494. The DNA-binding stretch occupies residues Glu-465 to Pro-567. Over residues Ile-506–Gln-523 the composition is skewed to polar residues. 2 positions are modified to phosphoserine: Ser-538 and Ser-547. A compositionally biased stretch (basic residues) spans Lys-550 to Ala-564. The segment covering Gln-608–Val-618 has biased composition (basic and acidic residues). 2 positions are modified to phosphoserine: Ser-614 and Ser-670. Polar residues-rich tracts occupy residues Cys-667–Gly-684 and Leu-693–Gly-710. The segment covering Ala-713–Ser-729 has biased composition (basic and acidic residues).

This sequence belongs to the LRRFIP family. In terms of assembly, homodimer. May also form higher oligomers. Interacts with FLII. Interacts with MYD88. Competes with FLII for MyD88-binding, even in the absence of LPS. Ubiquitously expressed.

It localises to the nucleus. The protein localises to the cytoplasm. In terms of biological role, transcriptional repressor which preferentially binds to the GC-rich consensus sequence (5'-AGCCCCCGGCG-3') and may regulate expression of TNF, EGFR and PDGFA. May control smooth muscle cells proliferation following artery injury through PDGFA repression. May also bind double-stranded RNA. Positively regulates Toll-like receptor (TLR) signaling in response to agonist probably by competing with the negative FLII regulator for MYD88-binding. In Mus musculus (Mouse), this protein is Leucine-rich repeat flightless-interacting protein 1 (Lrrfip1).